The primary structure comprises 303 residues: Glutathione transport system permease protein GsiD (303 aa).

Helical transmembrane passes span 40–60 (AMTA…ARWI), 105–125 (LAAG…LGLL), 144–164 (LFAF…GSGI), 165–185 (ANVI…LVRG), 222–242 (IVVF…SLSF), and 266–286 (VIAP…VLAF). One can recognise an ABC transmembrane type-1 domain in the interval 101-290 (AQISLAAGVF…LTVLAFNLLG (190 aa)).

It belongs to the binding-protein-dependent transport system permease family. The complex is composed of two ATP-binding proteins (GsiA), two transmembrane proteins (GsiC and GsiD) and a solute-binding protein (GsiB).

The protein localises to the cell inner membrane. Part of the ABC transporter complex GsiABCD involved in glutathione import. Probably responsible for the translocation of the substrate across the membrane. This is Glutathione transport system permease protein GsiD from Escherichia coli O6:K15:H31 (strain 536 / UPEC).